The following is a 160-amino-acid chain: MEIDILIDAPHWDALDLCGLAQSACVATLTDLSLDPDDFALSILACDDARIATLNTQFRGKPTPTNVLSWPSEDRAPETPGAMPHLSDLAAELGDLALAFETCAREAADGGKPLPDHISHLIVHGLLHCLGFDHETDADADLMERLETRILARLGVPDPY.

3 residues coordinate Zn(2+): His-124, His-128, and His-134.

It belongs to the endoribonuclease YbeY family. Zn(2+) serves as cofactor.

Its subcellular location is the cytoplasm. Its function is as follows. Single strand-specific metallo-endoribonuclease involved in late-stage 70S ribosome quality control and in maturation of the 3' terminus of the 16S rRNA. This is Endoribonuclease YbeY from Jannaschia sp. (strain CCS1).